The following is a 76-amino-acid chain: ATP synthase subunit c (76 aa).

A run of 2 helical transmembrane segments spans residues 13-33 and 55-75; these read LNVV…GILI and FLGL…AFIF.

Belongs to the ATPase C chain family. In terms of assembly, F-type ATPases have 2 components, F(1) - the catalytic core - and F(0) - the membrane proton channel. F(1) has five subunits: alpha(3), beta(3), gamma(1), delta(1), epsilon(1). F(0) has three main subunits: a(1), b(2) and c(10-14). The alpha and beta chains form an alternating ring which encloses part of the gamma chain. F(1) is attached to F(0) by a central stalk formed by the gamma and epsilon chains, while a peripheral stalk is formed by the delta and b chains.

The protein resides in the cell membrane. In terms of biological role, f(1)F(0) ATP synthase produces ATP from ADP in the presence of a proton or sodium gradient. F-type ATPases consist of two structural domains, F(1) containing the extramembraneous catalytic core and F(0) containing the membrane proton channel, linked together by a central stalk and a peripheral stalk. During catalysis, ATP synthesis in the catalytic domain of F(1) is coupled via a rotary mechanism of the central stalk subunits to proton translocation. Functionally, key component of the F(0) channel; it plays a direct role in translocation across the membrane. A homomeric c-ring of between 10-14 subunits forms the central stalk rotor element with the F(1) delta and epsilon subunits. The chain is ATP synthase subunit c from Bifidobacterium animalis subsp. lactis (strain AD011).